The sequence spans 328 residues: Homoarginine-6-hydroxylase 2-ODD-233 (328 aa).

The region spanning 183–288 (FWVCRLIGYP…VSVAFFYESN (106 aa)) is the Fe2OG dioxygenase domain. Fe cation contacts are provided by H210, D212, and H268. Position 278 (R278) interacts with 2-oxoglutarate.

Belongs to the iron/ascorbate-dependent oxidoreductase family. The cofactor is Fe(2+). L-ascorbate serves as cofactor. As to expression, expressed in roots and shoots.

The protein resides in the cytoplasm. The enzyme catalyses L-homoarginine + 2-oxoglutarate + O2 = 6-hydroxy-L-homoarginine + succinate + CO2. The catalysed reaction is melatonin + 2-oxoglutarate + O2 = 2-hydroxymelatonin + succinate + CO2. 2-oxoglutarate-dependent dioxygenase catalyzing homoarginine 6-hydroxylation thus producing 6-hydroxy-L-homoarginine. Guanidine (Gd) is in turn synthesized by the spontaneous conversion of 6-hydroxy-L-homoarginine to (S)-2-amino-6-oxohexanoate (RHEA:79843); guanidine is a nitrogen-rich compound that can serve as a defense or signaling substance. Involved in melatonin degradation. Catalyzes the hydroxylation of melatonin to produce 2-hydroxymelatonin. The sequence is that of Homoarginine-6-hydroxylase 2-ODD-233 from Oryza sativa subsp. japonica (Rice).